A 2061-amino-acid polypeptide reads, in one-letter code: Myoferlin (2061 aa).

Positions 1–101 (MLRVIVESAS…TGDQSRSLPY (101 aa)) constitute a C2 1 domain. Over 1-2025 (MLRVIVESAS…MKFIVWRRFK (2025 aa)) the chain is Cytoplasmic. The segment at 123 to 172 (GYDPPSAPHPNDLSGPSVPGMGGDGEEDEGDEDRLDNAVRGPGPKGPVGT) is disordered. The span at 146–156 (DGEEDEGDEDR) shows a compositional bias: acidic residues. The residue at position 174 (S174) is a Phosphoserine. 2 C2 domains span residues 181-300 (RLTK…RKWL) and 339-474 (DSDD…VEDF). Residues 186–281 (KNSRRMLSNK…RADCLMGEFK (96 aa)) are necessary for interaction with EHD2. The disordered stretch occupies residues 323–342 (LGTGDEPPPERRDRDNDSDD). The Ca(2+) site is built by D390, D396, D444, D446, and D452. K553 bears the N6-acetyllysine mark. Residue S729 is modified to Phosphoserine. Residue K884 is modified to N6-acetyllysine. The segment at 938–967 (ESRYPGGDWKPAEDTYTDANGDKAASPSEL) is disordered. 2 consecutive C2 domains span residues 1123-1251 (GANT…LLWH) and 1282-1410 (LPPQ…GKED). Residues D1155, D1161, D1217, and D1219 each contribute to the Ca(2+) site. K1507 is subject to N6-acetyllysine. C2 domains follow at residues 1536–1654 (PAPP…SHCG) and 1772–1920 (GPPG…EKCR). Residues D1569, D1575, D1624, D1626, D1891, S1894, and D1897 each contribute to the Ca(2+) site. S1915 carries the phosphoserine modification. Residues 2026 to 2046 (WVIIGLLFLLILLLFVAVLLY) form a helical membrane-spanning segment. Residues 2047–2061 (SLPNYLSMKIVKPNV) lie on the Extracellular side of the membrane.

Belongs to the ferlin family. Interacts with DNM2 and KDR. Interacts with EHD1. Interacts with EHD2; the interaction is direct. Interacts with RIPOR2. Ca(2+) serves as cofactor. In terms of tissue distribution, expressed in myoblast and endothelial cells (at protein level). Highly expressed in cardiac and skeletal muscles. Also present in lung, and at very low levels in kidney, placenta and brain.

The protein localises to the cell membrane. Its subcellular location is the nucleus membrane. It is found in the cytoplasmic vesicle membrane. Its function is as follows. Calcium/phospholipid-binding protein that plays a role in the plasmalemma repair mechanism of endothelial cells that permits rapid resealing of membranes disrupted by mechanical stress. Involved in endocytic recycling. Implicated in VEGF signal transduction by regulating the levels of the receptor KDR. This is Myoferlin (MYOF) from Homo sapiens (Human).